A 559-amino-acid polypeptide reads, in one-letter code: Formate--tetrahydrofolate ligase (559 aa).

66-73 (TPPGEGKT) provides a ligand contact to ATP.

Belongs to the formate--tetrahydrofolate ligase family.

The catalysed reaction is (6S)-5,6,7,8-tetrahydrofolate + formate + ATP = (6R)-10-formyltetrahydrofolate + ADP + phosphate. Its pathway is one-carbon metabolism; tetrahydrofolate interconversion. The protein is Formate--tetrahydrofolate ligase of Nocardioides sp. (strain ATCC BAA-499 / JS614).